Consider the following 810-residue polypeptide: DNA gyrase subunit A (810 aa).

Residues 36–502 enclose the Topo IIA-type catalytic domain; it reads LPDVRDGLKP…EVLKTSMSDL (467 aa). The O-(5'-phospho-DNA)-tyrosine intermediate role is filled by Tyr-124. The tract at residues 499–810 is C-terminal domain; the sequence is MSDLMQKENI…SLVSVSKFIK (312 aa). The short motif at 529-535 is the GyrA-box element; it reads QGTGGKG.

Belongs to the type II topoisomerase GyrA/ParC subunit family. As to quaternary structure, heterotetramer, composed of two GyrA and two GyrB chains. In the heterotetramer, GyrA contains the active site tyrosine that forms a transient covalent intermediate with DNA, while GyrB binds cofactors and catalyzes ATP hydrolysis.

The protein resides in the cytoplasm. It carries out the reaction ATP-dependent breakage, passage and rejoining of double-stranded DNA.. Functionally, a type II topoisomerase that negatively supercoils closed circular double-stranded (ds) DNA in an ATP-dependent manner to modulate DNA topology and maintain chromosomes in an underwound state. Negative supercoiling favors strand separation, and DNA replication, transcription, recombination and repair, all of which involve strand separation. Also able to catalyze the interconversion of other topological isomers of dsDNA rings, including catenanes and knotted rings. Type II topoisomerases break and join 2 DNA strands simultaneously in an ATP-dependent manner. This is DNA gyrase subunit A from Borreliella burgdorferi (strain ATCC 35210 / DSM 4680 / CIP 102532 / B31) (Borrelia burgdorferi).